The primary structure comprises 418 residues: MFRRLLIATVVGILAAFAVAGFRHAMLLLEWLFLNNDSGSLVNAATNLSPWRRLLTPALGGLAAGLLLMGWQKFTQQRPHAPTDYMEALQTDGQFDYAASLVKSLASLLVVTSGSAIGREGAMILLAALAASCFAQRFTPRQEWKLWIACGAAAGMAAAYRAPLAGSLFIAEVLFGTMMLASLGPVIISAVVALLVSNLINHSDALLYNVQLSVTVQARDYALIISTGVLAGLCGPLLLTLMNACHRGFVSLKLAPPWQLALGGLIVGLLSLFTPAVWGNGYSTVQSFLTAPPLLMIIAGIFLCKLCAVLASSGSGAPGGVFTPTLFIGLAIGMLYGRSLGLWFPDGEEITLLLGLTGMATLLAATTHAPIMSTLMICEMTGEYQLLPGLLIACVIASVISRTLHRDSIYRQHTAQHS.

A run of 10 helical transmembrane segments spans residues 5–25, 54–74, 146–166, 168–188, 222–242, 258–278, 291–311, 316–336, 352–372, and 380–400; these read LLIA…FRHA, LLTP…WQKF, LWIA…PLAG, LFIA…PVII, ALII…LTLM, WQLA…PAVW, APPL…AVLA, GAPG…GMLY, LLLG…APIM, and MTGE…ASVI.

It belongs to the chloride channel (TC 2.A.49) family. ClcB subfamily.

The protein resides in the cell inner membrane. Probably acts as an electrical shunt for an outwardly-directed proton pump that is linked to amino acid decarboxylation, as part of the extreme acid resistance (XAR) response. This Escherichia coli (strain ATCC 8739 / DSM 1576 / NBRC 3972 / NCIMB 8545 / WDCM 00012 / Crooks) protein is Voltage-gated ClC-type chloride channel ClcB.